We begin with the raw amino-acid sequence, 322 residues long: Putative MgpC-like protein MPN_367 (322 aa).

Residues 1–48 (MVGSGAAGSASSLQGNGSNSSGLKSLLRSAPVSVPPSSTSNQTLSLSN) show a composition bias toward low complexity. 2 disordered regions span residues 1 to 59 (MVGS…AVVS) and 118 to 145 (DATSTNLPHAAGASQTGLGTGSPREPAL). The segment covering 120–134 (TSTNLPHAAGASQTG) has biased composition (polar residues).

This sequence belongs to the MgpC family.

This is Putative MgpC-like protein MPN_367 from Mycoplasma pneumoniae (strain ATCC 29342 / M129 / Subtype 1) (Mycoplasmoides pneumoniae).